A 255-amino-acid polypeptide reads, in one-letter code: Small ribosomal subunit protein eS1 (255 aa).

Residues 1-18 (MAVGKNKRLSKGKKGLKK) are compositionally biased toward basic residues. The disordered stretch occupies residues 1–28 (MAVGKNKRLSKGKKGLKKRTQDPFSRKD). Alanine 2 is subject to N-acetylalanine; partial. The segment covering 19 to 28 (RTQDPFSRKD) has biased composition (basic and acidic residues).

The protein belongs to the eukaryotic ribosomal protein eS1 family. Component of the small ribosomal subunit. Mature ribosomes consist of a small (40S) and a large (60S) subunit. The 40S subunit contains about 33 different proteins and 1 molecule of RNA (18S). The 60S subunit contains about 49 different proteins and 3 molecules of RNA (25S, 5.8S and 5S).

Its subcellular location is the cytoplasm. This chain is Small ribosomal subunit protein eS1, found in Ajellomyces capsulatus (strain G186AR / H82 / ATCC MYA-2454 / RMSCC 2432) (Darling's disease fungus).